Here is a 245-residue protein sequence, read N- to C-terminus: Putative MSV199 domain-containing protein 146R (245 aa).

A GIY-YIG domain is found at 2 to 97; sequence RKGYIYVIEN…NTLHGKLKNL (96 aa).

In Acheta domesticus (House cricket), this protein is Putative MSV199 domain-containing protein 146R.